We begin with the raw amino-acid sequence, 178 residues long: MARLKARYNDELKAKLQEELSIKNVMEIPRITKITLNMGVGAAATDKKLLDGAVADMQLIAGQKPVVTLARKSIAGFKIRDGWPIGCKVTLRGDQMYEFLDRLISIAIPRIRDFRGFSAKSFDGRGNYSMGLKEQIVFPEIDFDKIDRIRGMDITITTTARTDDEGRALMRAFGFPFK.

Belongs to the universal ribosomal protein uL5 family. In terms of assembly, part of the 50S ribosomal subunit; part of the 5S rRNA/L5/L18/L25 subcomplex. Contacts the 5S rRNA and the P site tRNA. Forms a bridge to the 30S subunit in the 70S ribosome.

Functionally, this is one of the proteins that bind and probably mediate the attachment of the 5S RNA into the large ribosomal subunit, where it forms part of the central protuberance. In the 70S ribosome it contacts protein S13 of the 30S subunit (bridge B1b), connecting the 2 subunits; this bridge is implicated in subunit movement. Contacts the P site tRNA; the 5S rRNA and some of its associated proteins might help stabilize positioning of ribosome-bound tRNAs. The chain is Large ribosomal subunit protein uL5 from Acinetobacter baumannii (strain AB0057).